Consider the following 632-residue polypeptide: Effector protein hopAD1 (632 aa).

The interval 13 to 34 is disordered; the sequence is TAVDSSLPTSATSQTISNTKSR. The segment covering 15–32 has biased composition (polar residues); the sequence is VDSSLPTSATSQTISNTK.

It is found in the secreted. The chain is Effector protein hopAD1 (hopAD1) from Pseudomonas syringae pv. tomato (strain ATCC BAA-871 / DC3000).